Reading from the N-terminus, the 428-residue chain is Chaperone SurA (428 aa).

A signal peptide spans 1–20 (MKNWKTLLLGIAMIANTSFA). PpiC domains are found at residues 171–272 (STEL…KVND) and 282–382 (VTEV…ELLD).

It is found in the periplasm. It catalyses the reaction [protein]-peptidylproline (omega=180) = [protein]-peptidylproline (omega=0). In terms of biological role, chaperone involved in the correct folding and assembly of outer membrane proteins. Recognizes specific patterns of aromatic residues and the orientation of their side chains, which are found more frequently in integral outer membrane proteins. May act in both early periplasmic and late outer membrane-associated steps of protein maturation. The chain is Chaperone SurA from Salmonella paratyphi A (strain ATCC 9150 / SARB42).